The chain runs to 386 residues: tRNA-specific adenosine deaminase subunit tad2 (386 aa).

In terms of domain architecture, CMP/dCMP-type deaminase spans 212-322; that stretch reads TQHETYMKLA…GNDRFGGCGS (111 aa). Position 263 (histidine 263) interacts with Zn(2+). Glutamate 265 serves as the catalytic Proton donor. Zn(2+)-binding residues include cysteine 293 and cysteine 296.

Belongs to the cytidine and deoxycytidylate deaminase family. ADAT2 subfamily. Heterodimer with Tad3. The cofactor is Zn(2+).

The catalysed reaction is adenosine(34) in tRNA + H2O + H(+) = inosine(34) in tRNA + NH4(+). Structural subunit of tRNA-specific adenosine deaminase, which deaminates adenosine-34 (the first, also called wobble position of the anticodon) to inosine in many tRNAs. Inosine-34 allows the decoding of 3 different nucleotides at the third position of mRNA codons, as inosine is able to pair with U, C, and A. The wobble inosine tRNA modification is essential for cell cycle progression in the G1/S and G2/M transitions in fission yeast. The protein is tRNA-specific adenosine deaminase subunit tad2 (tad2) of Schizosaccharomyces pombe (strain 972 / ATCC 24843) (Fission yeast).